A 281-amino-acid chain; its full sequence is Elongation factor Ts (281 aa).

Residues 80-83 (TDFV) are involved in Mg(2+) ion dislocation from EF-Tu.

Belongs to the EF-Ts family.

Its subcellular location is the cytoplasm. Associates with the EF-Tu.GDP complex and induces the exchange of GDP to GTP. It remains bound to the aminoacyl-tRNA.EF-Tu.GTP complex up to the GTP hydrolysis stage on the ribosome. The sequence is that of Elongation factor Ts from Aliivibrio fischeri (strain MJ11) (Vibrio fischeri).